Reading from the N-terminus, the 122-residue chain is Large ribosomal subunit protein uL14 (122 aa).

Belongs to the universal ribosomal protein uL14 family. In terms of assembly, part of the 50S ribosomal subunit. Forms a cluster with proteins L3 and L19. In the 70S ribosome, L14 and L19 interact and together make contacts with the 16S rRNA in bridges B5 and B8.

Its function is as follows. Binds to 23S rRNA. Forms part of two intersubunit bridges in the 70S ribosome. The sequence is that of Large ribosomal subunit protein uL14 from Clostridium botulinum (strain Alaska E43 / Type E3).